We begin with the raw amino-acid sequence, 1045 residues long: Pre-mRNA-splicing factor ATP-dependent RNA helicase DHX16 (1045 aa).

Residues 101-211 form a disordered region; the sequence is EDSEESSEEA…ERSDKKAYEE (111 aa). Phosphoserine occurs at positions 103, 106, and 107. Over residues 119–131 the composition is skewed to basic residues; it reads QKKRKKRKHLRKK. The span at 135–144 shows a compositional bias: acidic residues; it reads EEEEEEEEEV. A Phosphoserine modification is found at S164. Residues 170–211 are compositionally biased toward basic and acidic residues; it reads RTERERLQDLEERDAFAERVRQRDKDRTRNVLERSDKKAYEE. One can recognise a Helicase ATP-binding domain in the interval 413-577; the sequence is LAAVANHQIL…FDDAPVFRIP (165 aa). 426-433 contributes to the ATP binding site; sequence GETGSGKT. Positions 524–527 match the DEAH box motif; sequence DEAH. In terms of domain architecture, Helicase C-terminal spans 602 to 775; it reads SVLQIHVTQP…NVVLLLKSLG (174 aa). Position 716 is a phosphothreonine (T716). The tract at residues 1026–1045 is disordered; the sequence is EDPHAKKMPKKTGKTREELG.

Belongs to the DEAD box helicase family. DEAH subfamily. DDX16/PRP8 sub-subfamily. As to quaternary structure, component of pre-catalytic spliceosome complexes. Component of the minor spliceosome, which splices U12-type introns. Interacts with GPKOW. Interacts with TRIM6. Interacts with RIGI.

Its subcellular location is the nucleus. The protein localises to the nucleoplasm. It is found in the cytoplasm. It carries out the reaction ATP + H2O = ADP + phosphate + H(+). Functionally, required for pre-mRNA splicing as a component of the spliceosome. Contributes to pre-mRNA splicing after spliceosome formation and prior to the first transesterification reaction. As a component of the minor spliceosome, involved in the splicing of U12-type introns in pre-mRNAs. Also plays a role in innate antiviral response by acting as a pattern recognition receptor sensing splicing signals in viral RNA. Mechanistically, TRIM6 promotes the interaction between unanchored 'Lys-48'-polyubiquitin chains and DHX16, leading to DHX16 interaction with RIGI and ssRNA to amplify RIGI-dependent innate antiviral immune responses. The sequence is that of Pre-mRNA-splicing factor ATP-dependent RNA helicase DHX16 (DHX16) from Sus scrofa (Pig).